The primary structure comprises 563 residues: Methylcrotonoyl-CoA carboxylase beta chain, mitochondrial (563 aa).

The N-terminal 22 residues, 1-22, are a transit peptide targeting the mitochondrion; that stretch reads MWAVLRLALRPCARASPAGPRA. Positions 49 to 306 constitute a CoA carboxyltransferase N-terminal domain; the sequence is MKALVNQLHE…QKKLDVTIEP (258 aa). The carboxyltransferase stretch occupies residues 49-555; that stretch reads MKALVNQLHE…SAALNAPIEK (507 aa). N6-acetyllysine; alternate is present on K70. Residue K70 is modified to N6-succinyllysine; alternate. The residue at position 141 (K141) is an N6-succinyllysine. The region spanning 309-555 is the CoA carboxyltransferase C-terminal domain; sequence EPLFPADELY…SAALNAPIEK (247 aa). Positions 343–372 are acyl-CoA binding; that stretch reads RFTEFKAFYGDTLVTGFARIFGYPVGIVGN. An N6-acetyllysine; alternate modification is found at K495. K495 carries the N6-succinyllysine; alternate modification. K511 carries the post-translational modification N6-acetyllysine.

Belongs to the AccD/PCCB family. As to quaternary structure, probably a dodecamer composed of six biotin-containing alpha subunits (MCCC1) and six beta (MCCC2) subunits.

It localises to the mitochondrion matrix. The enzyme catalyses 3-methylbut-2-enoyl-CoA + hydrogencarbonate + ATP = 3-methyl-(2E)-glutaconyl-CoA + ADP + phosphate + H(+). The protein operates within amino-acid degradation; L-leucine degradation; (S)-3-hydroxy-3-methylglutaryl-CoA from 3-isovaleryl-CoA: step 2/3. Functionally, carboxyltransferase subunit of the 3-methylcrotonyl-CoA carboxylase, an enzyme that catalyzes the conversion of 3-methylcrotonyl-CoA to 3-methylglutaconyl-CoA, a critical step for leucine and isovaleric acid catabolism. This is Methylcrotonoyl-CoA carboxylase beta chain, mitochondrial (MCCC2) from Homo sapiens (Human).